The sequence spans 691 residues: Ribonucleoprotein PTB-binding 2 (691 aa).

The segment covering 1-30 (MAAAAGDGGGEGGAGLGSAAGLGPGPGLRG) has biased composition (gly residues). Residues 1 to 47 (MAAAAGDGGGEGGAGLGSAAGLGPGPGLRGQGPSAEAHEGAPDPMPA) are disordered. The residue at position 2 (A2) is an N-acetylalanine. 3 RRM domains span residues 69-140 (RKIL…LQPT), 142-220 (ALLC…WMDV), and 231-309 (KCLC…FCAP). 2 disordered regions span residues 492-522 (PNQH…EGNF) and 543-574 (GHHK…GEPP). A compositionally biased stretch (polar residues) spans 548–569 (QQSQPKGTEISSGAASKNQTSL).

Interacts with PTBP1 and RAVER1.

It is found in the nucleus. It localises to the cytoplasm. Functionally, may bind single-stranded nucleic acids. The sequence is that of Ribonucleoprotein PTB-binding 2 (RAVER2) from Homo sapiens (Human).